Consider the following 287-residue polypeptide: Pyridoxal 5'-phosphate synthase subunit PdxS (287 aa).

Asp-21 serves as a coordination point for D-ribose 5-phosphate. Residue Lys-78 is the Schiff-base intermediate with D-ribose 5-phosphate of the active site. Gly-150 is a binding site for D-ribose 5-phosphate. Position 162 (Arg-162) interacts with D-glyceraldehyde 3-phosphate. D-ribose 5-phosphate is bound by residues Gly-211 and 232–233 (GS).

This sequence belongs to the PdxS/SNZ family. In the presence of PdxT, forms a dodecamer of heterodimers.

It catalyses the reaction aldehydo-D-ribose 5-phosphate + D-glyceraldehyde 3-phosphate + L-glutamine = pyridoxal 5'-phosphate + L-glutamate + phosphate + 3 H2O + H(+). Its pathway is cofactor biosynthesis; pyridoxal 5'-phosphate biosynthesis. Catalyzes the formation of pyridoxal 5'-phosphate from ribose 5-phosphate (RBP), glyceraldehyde 3-phosphate (G3P) and ammonia. The ammonia is provided by the PdxT subunit. Can also use ribulose 5-phosphate and dihydroxyacetone phosphate as substrates, resulting from enzyme-catalyzed isomerization of RBP and G3P, respectively. The chain is Pyridoxal 5'-phosphate synthase subunit PdxS from Francisella tularensis subsp. tularensis (strain FSC 198).